The chain runs to 153 residues: Riboflavin synthase (153 aa).

It belongs to the DMRL synthase family. In terms of assembly, homooligomer. Requires Mg(2+) as cofactor.

The enzyme catalyses 2 6,7-dimethyl-8-(1-D-ribityl)lumazine + H(+) = 5-amino-6-(D-ribitylamino)uracil + riboflavin. It participates in cofactor biosynthesis; riboflavin biosynthesis; riboflavin from 2-hydroxy-3-oxobutyl phosphate and 5-amino-6-(D-ribitylamino)uracil: step 2/2. Inhibited by EDTA. The polypeptide is Riboflavin synthase (ribC) (Methanothermobacter thermautotrophicus (strain ATCC 29096 / DSM 1053 / JCM 10044 / NBRC 100330 / Delta H) (Methanobacterium thermoautotrophicum)).